Here is an 87-residue protein sequence, read N- to C-terminus: Small ribosomal subunit protein bS18 (87 aa).

Over residues 1 to 20 (MAGKSSGDRRKPIRKGKDGK) the composition is skewed to basic and acidic residues. The tract at residues 1 to 24 (MAGKSSGDRRKPIRKGKDGKNAAP) is disordered.

This sequence belongs to the bacterial ribosomal protein bS18 family. Part of the 30S ribosomal subunit. Forms a tight heterodimer with protein bS6.

Its function is as follows. Binds as a heterodimer with protein bS6 to the central domain of the 16S rRNA, where it helps stabilize the platform of the 30S subunit. The polypeptide is Small ribosomal subunit protein bS18 (Leifsonia xyli subsp. xyli (strain CTCB07)).